A 217-amino-acid chain; its full sequence is Protein-L-isoaspartate O-methyltransferase (217 aa).

Residue Ser64 is part of the active site.

Belongs to the methyltransferase superfamily. L-isoaspartyl/D-aspartyl protein methyltransferase family.

It localises to the cytoplasm. It catalyses the reaction [protein]-L-isoaspartate + S-adenosyl-L-methionine = [protein]-L-isoaspartate alpha-methyl ester + S-adenosyl-L-homocysteine. Its function is as follows. Catalyzes the methyl esterification of L-isoaspartyl residues in peptides and proteins that result from spontaneous decomposition of normal L-aspartyl and L-asparaginyl residues. It plays a role in the repair and/or degradation of damaged proteins. The protein is Protein-L-isoaspartate O-methyltransferase of Nitrobacter winogradskyi (strain ATCC 25391 / DSM 10237 / CIP 104748 / NCIMB 11846 / Nb-255).